The following is a 195-amino-acid chain: Magnetosome membrane protein 22 (195 aa).

Residues 1–28 (MAAQTAASEAPAPAAAPADSPTTAGPTP) are compositionally biased toward low complexity. Residues 1–31 (MAAQTAASEAPAPAAAPADSPTTAGPTPDSV) are disordered. The next 3 membrane-spanning stretches (helical) occupy residues 45 to 65 (VLAA…AAVV), 90 to 110 (SVIA…AVAV), and 115 to 135 (LIPG…AGAT).

Its subcellular location is the magnetosome membrane. The protein is Magnetosome membrane protein 22 of Magnetospirillum gryphiswaldense (strain DSM 6361 / JCM 21280 / NBRC 15271 / MSR-1).